A 22-amino-acid polypeptide reads, in one-letter code: FALESFWDGKGNASAHAMEMTK.

This sequence belongs to the vitamin-B12 independent methionine synthase family. Requires Zn(2+) as cofactor.

It is found in the cytoplasm. It catalyses the reaction 5-methyltetrahydropteroyltri-L-glutamate + L-homocysteine = tetrahydropteroyltri-L-glutamate + L-methionine. The protein operates within amino-acid biosynthesis; L-methionine biosynthesis via de novo pathway; L-methionine from L-homocysteine (MetE route): step 1/1. Its function is as follows. Catalyzes the transfer of a methyl group from 5-methyltetrahydrofolate to homocysteine resulting in methionine formation. In Pseudotsuga menziesii (Douglas-fir), this protein is 5-methyltetrahydropteroyltriglutamate--homocysteine methyltransferase.